Reading from the N-terminus, the 1087-residue chain is Band 4.1-like protein 3 (1087 aa).

N-acetylmethionine is present on methionine 1. A disordered region spans residues 1–43 (MTTESGSDSESKPDQEAEPQEAAGAQGRAGAPVPEPPKEEQQQ). Threonine 2 carries the N-acetylthreonine; in Band 4.1-like protein 3, N-terminally processed modification. Positions 20–32 (QEAAGAQGRAGAP) are enriched in low complexity. Serine 88 carries the phosphoserine modification. The 282-residue stretch at 110–391 (MQCKVILLDG…EHHTFFRLLL (282 aa)) folds into the FERM domain. The segment at 394 to 513 (APPKKFLTLG…PGLGTDSCPL (120 aa)) is hydrophilic. A phosphoserine mark is found at serine 420, serine 443, and serine 460. A compositionally biased stretch (polar residues) spans 459–469 (ISQTNLITTVT). Disordered stretches follow at residues 459-529 (ISQT…TELR), 541-563 (GYEPSRAEHLPGEPALDSDGPGR), 675-715 (SASL…EDAE), and 937-965 (SETLEQKPHFESSTVKTETISFGSVSPGG). Threonine 469 and threonine 492 each carry phosphothreonine. The interval 514 to 860 (SPPSTHCAPT…VVQETVLVEE (347 aa)) is spectrin--actin-binding. A compositionally biased stretch (polar residues) spans 516–526 (PSTHCAPTSPT). Positions 681–691 (DPSDSSEEETD) are enriched in acidic residues. Over residues 698 to 707 (AADGETTATE) the composition is skewed to low complexity. The residue at position 706 (threonine 706) is a Phosphothreonine. Serine 708, serine 960, and serine 962 each carry phosphoserine. The C-terminal (CTD) stretch occupies residues 861 to 1083 (RRVVHASGDA…VHKETEITPE (223 aa)). The span at 947–960 (ESSTVKTETISFGS) shows a compositional bias: polar residues. At threonine 1081 the chain carries Phosphothreonine.

Interacts (via FERM domain) with CADM1. Interacts (via FERM domain) with PRMT3; the interaction is direct and inhibits the protein-arginine N-methyltransferase activity of PRMT3. Interacts with PRMT5. Interacts with PRMT6. In terms of tissue distribution, expressed at high levels in brain, with lower levels in kidney, intestine, and testis. Detected in lung.

Its subcellular location is the cytoplasm. It localises to the cytoskeleton. The protein resides in the cell junction. It is found in the cell membrane. In terms of biological role, tumor suppressor that inhibits cell proliferation and promotes apoptosis. Modulates the activity of protein arginine N-methyltransferases, including PRMT3 and PRMT5. This chain is Band 4.1-like protein 3, found in Homo sapiens (Human).